A 278-amino-acid polypeptide reads, in one-letter code: 4-deoxy-L-threo-5-hexosulose-uronate ketol-isomerase (278 aa).

Zn(2+)-binding residues include histidine 196, histidine 198, glutamate 203, and histidine 245.

Belongs to the KduI family. Zn(2+) serves as cofactor.

It carries out the reaction 5-dehydro-4-deoxy-D-glucuronate = 3-deoxy-D-glycero-2,5-hexodiulosonate. Its pathway is glycan metabolism; pectin degradation; 2-dehydro-3-deoxy-D-gluconate from pectin: step 4/5. Functionally, catalyzes the isomerization of 5-dehydro-4-deoxy-D-glucuronate to 3-deoxy-D-glycero-2,5-hexodiulosonate. The polypeptide is 4-deoxy-L-threo-5-hexosulose-uronate ketol-isomerase (Edwardsiella ictaluri (strain 93-146)).